The following is a 507-amino-acid chain: Maturase K (507 aa).

This sequence belongs to the intron maturase 2 family. MatK subfamily.

It is found in the plastid. The protein resides in the chloroplast. Usually encoded in the trnK tRNA gene intron. Probably assists in splicing its own and other chloroplast group II introns. This is Maturase K from Calocedrus decurrens (California incense-cedar).